A 1112-amino-acid polypeptide reads, in one-letter code: Mediator of RNA polymerase II transcription subunit 14 (1112 aa).

It belongs to the Mediator complex subunit 14 family. Component of the Mediator complex.

The protein resides in the nucleus. Component of the Mediator complex, a coactivator involved in the regulated transcription of nearly all RNA polymerase II-dependent genes. Mediator functions as a bridge to convey information from gene-specific regulatory proteins to the basal RNA polymerase II transcription machinery. Mediator is recruited to promoters by direct interactions with regulatory proteins and serves as a scaffold for the assembly of a functional preinitiation complex with RNA polymerase II and the general transcription factors. The polypeptide is Mediator of RNA polymerase II transcription subunit 14 (RGR1) (Scheffersomyces stipitis (strain ATCC 58785 / CBS 6054 / NBRC 10063 / NRRL Y-11545) (Yeast)).